A 1700-amino-acid chain; its full sequence is Rho guanine nucleotide exchange factor 28 (1700 aa).

The segment at threonine 288–aspartate 335 is disordered. A phosphoserine mark is found at serine 312, serine 314, and serine 478. The disordered stretch occupies residues valine 483–proline 525. Serine 623 carries the post-translational modification Phosphoserine. The Phorbol-ester/DAG-type zinc-finger motif lies at arginine 651 to cysteine 698. The span at asparagine 709–valine 720 shows a compositional bias: polar residues. 2 disordered regions span residues asparagine 709–threonine 761 and glutamate 774–proline 799. Over residues leucine 728–proline 737 the composition is skewed to low complexity. Residues glutamate 774 to arginine 783 show a composition bias toward polar residues. One can recognise a DH domain in the interval lysine 848–lysine 1043. The 103-residue stretch at alanine 1085–glutamate 1187 folds into the PH domain. A disordered region spans residues valine 1186–alanine 1207. Residues glutamate 1193–alanine 1207 show a composition bias toward basic and acidic residues. An interaction with PTK2/FAK1; required for regulation of axonal branching and synapse formation region spans residues aspartate 1294–proline 1303. The segment at isoleucine 1369–leucine 1380 is mediates cytoplasmic retention and interaction with YWHAH. The tract at residues glutamine 1421–leucine 1700 is interaction with microtubules. Positions glutamate 1473 to glutamine 1522 form a coiled coil. The segment at glutamine 1493–leucine 1524 is RNA-binding. Serine 1535 is subject to Phosphoserine. The tract at residues phenylalanine 1563–serine 1576 is mediates cytoplasmic retention and interaction with MAPK8IP1. The interval asparagine 1574–leucine 1598 is disordered. Phosphoserine is present on serine 1604. Positions valine 1612–leucine 1700 are disordered. Positions serine 1613–tryptophan 1623 are enriched in polar residues. Residues alanine 1633 to cysteine 1642 show a composition bias toward basic and acidic residues. Polar residues predominate over residues aspartate 1647–isoleucine 1672.

Homooligomer; forms cytoplasmic aggregates. Forms a complex with MAPK8 and MAPK8IP1. Interacts with RHOA. Interacts with microtubules. Interacts with YWHAE and YWHAH. Interacts with PTK2/FAK1. Interacts with NEFL. Interacts with CTNND2; prevents interaction with RHOA. In terms of processing, phosphorylated on tyrosine upon stimulation of cells by laminin.

Its subcellular location is the cytoplasm. It is found in the cell membrane. In terms of biological role, functions as a RHOA-specific guanine nucleotide exchange factor regulating signaling pathways downstream of integrins and growth factor receptors. Functions in axonal branching, synapse formation and dendritic morphogenesis. Also functions in focal adhesion formation, cell motility and B-lymphocytes activation. May regulate NEFL expression and aggregation and play a role in apoptosis. The polypeptide is Rho guanine nucleotide exchange factor 28 (Arhgef28) (Rattus norvegicus (Rat)).